The primary structure comprises 535 residues: T-complex protein 1 subunit beta (535 aa).

Ala-2 bears the N-acetylalanine mark. Position 3 is a phosphoserine (Ser-3). The residue at position 13 (Lys-13) is an N6-acetyllysine. Gly-44 lines the ADP pocket. Gly-44 contributes to the ATP binding site. A Phosphoserine modification is found at Ser-60. A Mg(2+)-binding site is contributed by Asp-97. ADP is bound by residues Gly-98, Thr-99, Thr-100, and Ser-101. The ATP site is built by Gly-98, Thr-99, and Thr-100. At Lys-154 the chain carries N6-acetyllysine. Residues Ser-168 and Ser-169 each contribute to the ADP site. Lys-181 carries the N6-acetyllysine modification. Lys-248 participates in a covalent cross-link: Glycyl lysine isopeptide (Lys-Gly) (interchain with G-Cter in SUMO2). Ser-260 carries the post-translational modification Phosphoserine. Thr-261 is modified (phosphothreonine). Gly-410, Glu-495, and Lys-500 together coordinate ADP. Residues Glu-495 and Lys-500 each contribute to the ATP site.

Belongs to the TCP-1 chaperonin family. Component of the chaperonin-containing T-complex (TRiC), a hexadecamer composed of two identical back-to-back stacked rings enclosing a protein folding chamber. Each ring is made up of eight different subunits: TCP1/CCT1, CCT2, CCT3, CCT4, CCT5, CCT6A/CCT6, CCT7, CCT8. Interacts with PACRG. Interacts with FLCN. Interacts with DLEC1. Interacts with SVEP1.

It localises to the cytoplasm. The catalysed reaction is ATP + H2O = ADP + phosphate + H(+). Its function is as follows. Component of the chaperonin-containing T-complex (TRiC), a molecular chaperone complex that assists the folding of actin, tubulin and other proteins upon ATP hydrolysis. The TRiC complex mediates the folding of WRAP53/TCAB1, thereby regulating telomere maintenance. As part of the TRiC complex may play a role in the assembly of BBSome, a complex involved in ciliogenesis regulating transports vesicles to the cilia. The sequence is that of T-complex protein 1 subunit beta (CCT2) from Bos taurus (Bovine).